The primary structure comprises 160 residues: Troponin C, skeletal muscle (160 aa).

At Thr2 the chain carries N-acetylthreonine. EF-hand domains are found at residues 15–50 (EMIA…LGQT), 51–86 (PTKE…QMKE), 91–126 (KSEE…SGEH), and 127–160 (VTEE…EGVQ). Ca(2+) is bound by residues Asp28, Asp30, Asp34, Glu39, Asp64, Asp66, Ser68, Thr70, Glu75, Asp104, Asn106, Asp108, Tyr110, Glu115, Asp140, Asn142, Asp144, Arg146, and Glu151.

This sequence belongs to the troponin C family. As to expression, fast skeletal muscle.

In terms of biological role, troponin is the central regulatory protein of striated muscle contraction. Tn consists of three components: Tn-I which is the inhibitor of actomyosin ATPase, Tn-T which contains the binding site for tropomyosin and Tn-C. The binding of calcium to Tn-C abolishes the inhibitory action of Tn on actin filaments. This Mus musculus (Mouse) protein is Troponin C, skeletal muscle (Tnnc2).